A 354-amino-acid polypeptide reads, in one-letter code: Galactoside alpha-(1,2)-fucosyltransferase 2 (354 aa).

Topologically, residues 1–5 (MASAQ) are cytoplasmic. A helical; Signal-anchor for type II membrane protein membrane pass occupies residues 6-26 (VPFSFPLAHFLIFVFVTSTIT). Residues 27-354 (HLQQRIVKLQ…PADLSPLLKH (328 aa)) lie on the Lumenal side of the membrane. The interval 43 to 68 (LPMTTQMSSGNTESPEMRRDSEQHGN) is disordered. Positions 45–56 (MTTQMSSGNTES) are enriched in polar residues. Residues 57-68 (PEMRRDSEQHGN) show a composition bias toward basic and acidic residues. The N-linked (GlcNAc...) asparagine glycan is linked to asparagine 199.

This sequence belongs to the glycosyltransferase 11 family. Specifically expressed in gut.

The protein resides in the golgi apparatus. Its subcellular location is the golgi stack membrane. The enzyme catalyses a beta-D-galactosyl-(1-&gt;3)-N-acetyl-beta-D-glucosaminyl derivative + GDP-beta-L-fucose = an alpha-L-Fuc-(1-&gt;2)-beta-D-Gal-(1-&gt;3)-beta-D-GlcNAc derivative + GDP + H(+). It catalyses the reaction a beta-D-galactosyl-(1-&gt;4)-N-acetyl-beta-D-glucosaminyl derivative + GDP-beta-L-fucose = an alpha-L-Fuc-(1-&gt;2)-beta-D-Gal-(1-&gt;4)-beta-D-GlcNAc derivative + GDP + H(+). It carries out the reaction a ganglioside GM1 (d18:1(4E)) + GDP-beta-L-fucose = a ganglioside Fuc-GM1 (d18:1(4E)) + GDP + H(+). The catalysed reaction is a globoside GalGb4Cer (d18:1(4E)) + GDP-beta-L-fucose = a globoside Globo-H (d18:1(4E)) + GDP + H(+). The enzyme catalyses a neolactoside nLc4Cer + GDP-beta-L-fucose = a neolactoside IV(2)-alpha-Fuc-nLc4Cer + GDP + H(+). It catalyses the reaction a neolactoside nLc4Cer(d18:1(4E)) + GDP-beta-L-fucose = a neolactoside IV(2)-alpha-Fuc-nLc4Cer(d18:1(4E)) + GDP + H(+). It carries out the reaction a ganglioside GM1 + GDP-beta-L-fucose = a ganglioside Fuc-GM1 + GDP + H(+). The catalysed reaction is a ganglioside GA1 + GDP-beta-L-fucose = a ganglioside Fuc-GA1 + GDP + H(+). The enzyme catalyses Lc4Cer + GDP-beta-L-fucose = alpha-L-fucosyl-(1-&gt;2)-beta-D-galactosyl-(1-&gt;3)-N-acetyl-beta-D-glucosaminyl-(1-&gt;3)-beta-D-galactosyl-(1-&gt;4)-beta-D-glucosyl-(1&lt;-&gt;1')-ceramide + GDP + H(+). It catalyses the reaction a beta-D-Gal-(1-&gt;3)-beta-D-GlcNAc-(1-&gt;3)-beta-D-Gal-(1-&gt;4)-beta-D-Glc-(1&lt;-&gt;1')-Cer(d18:1(4E)) + GDP-beta-L-fucose = alpha-L-fucosyl-(1-&gt;2)- beta-D-galactosyl-(1-&gt;3)-N-acetyl-beta-D-glucosaminyl-(1-&gt;3)-beta-D-galactosyl-(1-&gt;4)-beta-D-glucosyl-(1&lt;-&gt;1')-N-acylsphing-4-enine + GDP + H(+). It carries out the reaction a ganglioside GD1b + GDP-beta-L-fucose = a ganglioside Fuc-GD1b + GDP + H(+). The catalysed reaction is a lactoside III(4)-a-Fuc-Lc4Cer + GDP-beta-L-fucose = a lactoside IV(2),III(4)-a-[Fuc]2-Lc4Cer + GDP + H(+). The enzyme catalyses beta-D-galactosyl-(1-&gt;3)-N-acetyl-D-galactosamine + GDP-beta-L-fucose = alpha-L-fucosyl-(1-&gt;2)-beta-D-galactosyl-(1-&gt;3)-N-acetyl-D-galactosamine + GDP + H(+). The protein operates within protein modification; protein glycosylation. Its function is as follows. Catalyzes the transfer of L-fucose, from a guanosine diphosphate-beta-L-fucose, to the terminal galactose on both O- and N-linked glycans chains of cell surface glycoproteins and glycolipids and the resulting epitope regulates several processes such as cell-cell interaction including host-microbe interaction, cell surface expression and cell proliferation. Preferentially fucosylates gangliosides GA1 and GM1 in the antrum, cecum and colon and in the female reproductive organs. Fucosylated host glycoproteins or glycolipids mediate interaction with intestinal microbiota influencing its composition. Creates a soluble precursor oligosaccharide FuC-alpha ((1,2)Galbeta-) called the H antigen which is an essential substrate for the final step in the soluble ABO blood group antigen synthesis pathway. In Rattus norvegicus (Rat), this protein is Galactoside alpha-(1,2)-fucosyltransferase 2.